The sequence spans 365 residues: Metallophosphoesterase 1 homolog (365 aa).

Residues 10–30 (PILLAIILVVYNEYFIFFIAF) form a helical membrane-spanning segment. Positions 54, 96, 132, 208, 262, and 264 each coordinate a divalent metal cation. Residues 319–339 (ILQIMVYIFGGIGIVILAFIL) traverse the membrane as a helical segment.

It belongs to the metallophosphoesterase superfamily. MPPE1 family. The cofactor is Mn(2+).

The protein resides in the endoplasmic reticulum-Golgi intermediate compartment membrane. Its subcellular location is the golgi apparatus. The protein localises to the cis-Golgi network membrane. Metallophosphoesterase required for transport of GPI-anchor proteins from the endoplasmic reticulum to the Golgi. Acts in lipid remodeling steps of GPI-anchor maturation by mediating the removal of a side-chain ethanolamine-phosphate (EtNP) from the second Man (Man2) of the GPI intermediate, an essential step for efficient transport of GPI-anchor proteins. The polypeptide is Metallophosphoesterase 1 homolog (Caenorhabditis elegans).